Consider the following 468-residue polypeptide: UDP-N-acetylmuramate--L-alanine ligase (468 aa).

112–118 (GTHGKTT) contributes to the ATP binding site.

Belongs to the MurCDEF family.

The protein resides in the cytoplasm. It catalyses the reaction UDP-N-acetyl-alpha-D-muramate + L-alanine + ATP = UDP-N-acetyl-alpha-D-muramoyl-L-alanine + ADP + phosphate + H(+). It functions in the pathway cell wall biogenesis; peptidoglycan biosynthesis. Cell wall formation. The polypeptide is UDP-N-acetylmuramate--L-alanine ligase (Bordetella avium (strain 197N)).